A 310-amino-acid chain; its full sequence is Phosphoribosylaminoimidazole-succinocarboxamide synthase (310 aa).

This sequence belongs to the SAICAR synthetase family.

The enzyme catalyses 5-amino-1-(5-phospho-D-ribosyl)imidazole-4-carboxylate + L-aspartate + ATP = (2S)-2-[5-amino-1-(5-phospho-beta-D-ribosyl)imidazole-4-carboxamido]succinate + ADP + phosphate + 2 H(+). Its pathway is purine metabolism; IMP biosynthesis via de novo pathway; 5-amino-1-(5-phospho-D-ribosyl)imidazole-4-carboxamide from 5-amino-1-(5-phospho-D-ribosyl)imidazole-4-carboxylate: step 1/2. This chain is Phosphoribosylaminoimidazole-succinocarboxamide synthase, found in Xanthomonas oryzae pv. oryzae (strain MAFF 311018).